Reading from the N-terminus, the 409-residue chain is Elongation factor Tu, plastid (409 aa).

The tr-type G domain maps to 10-214 (KPHINIGTIG…KIDSYIPTPI (205 aa)). The G1 stretch occupies residues 19–26 (GHVDHGKT). Residue 19-26 (GHVDHGKT) coordinates GTP. Threonine 26 is a binding site for Mg(2+). The segment at 60-64 (GITIN) is G2. The segment at 81–84 (DCPG) is G3. GTP is bound by residues 81–85 (DCPGH) and 136–139 (NKED). Positions 136-139 (NKED) are G4. The G5 stretch occupies residues 174–176 (SAL).

Belongs to the TRAFAC class translation factor GTPase superfamily. Classic translation factor GTPase family. EF-Tu/EF-1A subfamily.

Its subcellular location is the plastid. It carries out the reaction GTP + H2O = GDP + phosphate + H(+). In terms of biological role, GTP hydrolase that promotes the GTP-dependent binding of aminoacyl-tRNA to the A-site of ribosomes during protein biosynthesis. In Euglena longa (Euglenophycean alga), this protein is Elongation factor Tu, plastid (tufA).